The primary structure comprises 622 residues: SLAIN motif-containing protein-like (622 aa).

Residues 34 to 60 (DLKEVQKLHELVKRLEIQNQQLKIKRN) adopt a coiled-coil conformation. 2 disordered regions span residues 404-441 (HRYS…IQNH) and 473-622 (VRSS…DGCY). The span at 405-415 (RYSPSPLSSPR) shows a compositional bias: low complexity. Composition is skewed to polar residues over residues 416-430 (CQSP…TTSR), 484-502 (QGPS…STPP), 525-591 (VSTS…STVP), and 599-611 (SRRS…MNST).

It belongs to the SLAIN motif-containing family.

The sequence is that of SLAIN motif-containing protein-like from Xenopus tropicalis (Western clawed frog).